Consider the following 321-residue polypeptide: ATP-dependent 6-phosphofructokinase (321 aa).

Gly12 provides a ligand contact to ATP. ADP contacts are provided by residues 22-26 (RGVVR) and 55-60 (RYSVSD). ATP contacts are provided by residues 73–74 (RF) and 103–106 (GDGS). Residue Asp104 coordinates Mg(2+). 127–129 (TID) is a binding site for substrate. Residue Asp129 is the Proton acceptor of the active site. Arg156 is a binding site for ADP. Substrate contacts are provided by residues Arg164 and 171–173 (MGR). ADP is bound by residues 187–189 (GCE), Arg213, and 215–217 (KRH). Substrate is bound by residues Glu224, Arg245, and 251-254 (HIQR).

Belongs to the phosphofructokinase type A (PFKA) family. ATP-dependent PFK group I subfamily. Prokaryotic clade 'B1' sub-subfamily. As to quaternary structure, homotetramer. The cofactor is Mg(2+).

It is found in the cytoplasm. The catalysed reaction is beta-D-fructose 6-phosphate + ATP = beta-D-fructose 1,6-bisphosphate + ADP + H(+). Its pathway is carbohydrate degradation; glycolysis; D-glyceraldehyde 3-phosphate and glycerone phosphate from D-glucose: step 3/4. Allosterically activated by ADP and other diphosphonucleosides, and allosterically inhibited by phosphoenolpyruvate. Catalyzes the phosphorylation of D-fructose 6-phosphate to fructose 1,6-bisphosphate by ATP, the first committing step of glycolysis. The sequence is that of ATP-dependent 6-phosphofructokinase from Haemophilus influenzae (strain PittEE).